Consider the following 122-residue polypeptide: Large ribosomal subunit protein uL14 (122 aa).

This sequence belongs to the universal ribosomal protein uL14 family. As to quaternary structure, part of the 50S ribosomal subunit. Forms a cluster with proteins L3 and L19. In the 70S ribosome, L14 and L19 interact and together make contacts with the 16S rRNA in bridges B5 and B8.

In terms of biological role, binds to 23S rRNA. Forms part of two intersubunit bridges in the 70S ribosome. In Burkholderia vietnamiensis (strain G4 / LMG 22486) (Burkholderia cepacia (strain R1808)), this protein is Large ribosomal subunit protein uL14.